Reading from the N-terminus, the 397-residue chain is Phosphoglycerate kinase (397 aa).

Substrate contacts are provided by residues 22 to 24, Arg-37, 60 to 63, Arg-119, and Arg-152; these read DLN and HFGR. Residues Lys-202, Glu-324, and 354–357 each bind ATP; that span reads GGDT.

This sequence belongs to the phosphoglycerate kinase family. As to quaternary structure, monomer.

The protein localises to the cytoplasm. The enzyme catalyses (2R)-3-phosphoglycerate + ATP = (2R)-3-phospho-glyceroyl phosphate + ADP. The protein operates within carbohydrate degradation; glycolysis; pyruvate from D-glyceraldehyde 3-phosphate: step 2/5. The sequence is that of Phosphoglycerate kinase from Rhizorhabdus wittichii (strain DSM 6014 / CCUG 31198 / JCM 15750 / NBRC 105917 / EY 4224 / RW1) (Sphingomonas wittichii).